The chain runs to 115 residues: NADH-ubiquinone oxidoreductase chain 3 (115 aa).

3 helical membrane-spanning segments follow: residues 3–23 (LMLVLLINTTISLVLVTIAFW), 55–75 (FFLVAITFLLFDLEIALLLPL), and 87–107 (VLIMALMLISILALGLAYEWI).

This sequence belongs to the complex I subunit 3 family. Core subunit of respiratory chain NADH dehydrogenase (Complex I) which is composed of 45 different subunits. Interacts with TMEM186. Interacts with TMEM242.

It localises to the mitochondrion inner membrane. It catalyses the reaction a ubiquinone + NADH + 5 H(+)(in) = a ubiquinol + NAD(+) + 4 H(+)(out). In terms of biological role, core subunit of the mitochondrial membrane respiratory chain NADH dehydrogenase (Complex I) which catalyzes electron transfer from NADH through the respiratory chain, using ubiquinone as an electron acceptor. Essential for the catalytic activity of complex I. This is NADH-ubiquinone oxidoreductase chain 3 from Oryctolagus cuniculus (Rabbit).